The following is a 558-amino-acid chain: MAELNTHVNVKEKIYAVRSVVPNKSNNEIVLVLQQFDFNVDKAVQAFVDGSAIQVLKEWSMTGKKKNNKRKRSKSKQHQGNKDAKDKGERPEVGPLQPQAPLVQNGHMNGCEKDSSSPDSAREKLALTPREKKISILEEPPRAQRGITEGSRLLQQKMSLDGNPKAIHGPSERSDGLQWSAGQPCNPSKPKAKTSPVKSNAPAAHLEIKPDELAKKRGPNIEKSVKDLQRCTVSLTRYRVMIKEEVDSSVKKIKAAFAELHNCIIDKEVSLMAEMDKVKEEAMDILTARQKKAEELKRLTDLASQMAEMQLAELRAEIKHFVSERKYDEELGKAARFSCDIEQLKAQILICGEITHPKNNYSSRTPCSSLLPLLNTHAVASGKQGNFSRKSSGHNKPNEGKAANPKMVSGLPSTADACQQTMPTNKQQNGPSNQRRRFNPQYHNRLNGPAKSQGSGNEADPMVKSNNRHEHRRQPHNGFRPKNKGGAKNQEAPLGTKAPEAPPHSEKARRRQHAADNLETRPFRGNVGRVSQCNLCPTRIEVSTEATVLSVPAVTLVA.

N-acetylalanine is present on alanine 2. The segment covering 63 to 79 (GKKKNNKRKRSKSKQHQ) has biased composition (basic residues). Disordered stretches follow at residues 63-148 (GKKK…RGIT) and 161-202 (DGNP…SNAP). Composition is skewed to basic and acidic residues over residues 80–92 (GNKD…ERPE) and 110–142 (GCEK…EPPR). Serine 120 is subject to Phosphoserine. The stretch at 279-344 (KEEAMDILTA…ARFSCDIEQL (66 aa)) forms a coiled coil. A disordered region spans residues 383–514 (KQGNFSRKSS…SEKARRRQHA (132 aa)). Polar residues predominate over residues 416-433 (DACQQTMPTNKQQNGPSN). Serine 455 carries the post-translational modification Phosphoserine. Positions 469–485 (HEHRRQPHNGFRPKNKG) are enriched in basic residues.

Belongs to the SPATS2 family.

It is found in the cytoplasm. Its subcellular location is the nucleus. The protein resides in the nucleolus. This chain is SPATS2-like protein (Spats2l), found in Rattus norvegicus (Rat).